We begin with the raw amino-acid sequence, 896 residues long: Microsomal triglyceride transfer protein large subunit (896 aa).

The first 21 residues, 1-21, serve as a signal peptide directing secretion; it reads MILLAVLFLCFFSSYSASVKG. A Vitellogenin domain is found at 28-659; the sequence is LNNERLYKLT…IFQYIGKAEL (632 aa). A disulfide bridge connects residues Cys-174 and Cys-194.

As to quaternary structure, heterodimer; heterodimerizes with the protein disulfide isomerase (P4HB/PDI). Interacts with APOB. Interacts with PRAP1.

It is found in the endoplasmic reticulum. It localises to the golgi apparatus. It carries out the reaction a 1,2-diacyl-sn-glycero-3-phosphocholine(in) = a 1,2-diacyl-sn-glycero-3-phosphocholine(out). It catalyses the reaction a 1,2-diacyl-sn-glycero-3-phosphoethanolamine(in) = a 1,2-diacyl-sn-glycero-3-phosphoethanolamine(out). The catalysed reaction is a cholesterol ester(in) = a cholesterol ester(out). The enzyme catalyses a triacyl-sn-glycerol(in) = a triacyl-sn-glycerol(out). Its function is as follows. Catalyzes the transport of triglyceride, cholesteryl ester, and phospholipid between phospholipid surfaces. Required for the assembly and secretion of plasma lipoproteins that contain apolipoprotein B. May be involved in regulating cholesteryl ester biosynthesis in cells that produce lipoproteins. This Rattus norvegicus (Rat) protein is Microsomal triglyceride transfer protein large subunit (Mttp).